Consider the following 847-residue polypeptide: MNSPALLRCLLGSKKRAAVVVAFWVLIAGLLAGVAPALESVEDNASANLPPAASDSMKARDLVRAQLPGQDATPAIIVVRGKGTDAAKSATQSVAAITSALSGTSRPDHVVSVVSTVTAPDAAAELVSQDRGAQLVIVPMEGSPSDESFQNAVDEVRALASDRAGPADVAVTGPAGIATDTVKVFSGGDKVLLLATVVLVLIILLAIYRSPLMALVPLLAVGVAMRVAETLGAILADAGVITVSSQTASIMTVLLFGVGTDYALIITARYRETLLDEPDRARAMQAAVRRTAESVLASASTIVLAMFALLVAVSPALHGFGPYLALGVAVMALVAFTFIPALVLLLGRSVFWPGGVDKAAERSRGAGIWHRIAALVARAPVKVASAVIALLVVLSAGLLGYQESFNTLSGFRAATESEHGQHLIREEFGPGEIAPSTVVVHSQDNLRSSPAPADIATALTDADHVSRVADPRMGKDGKTVFYDVILDLDPYSSKALDAIGPLKQATQSAAQAAGVQDATVLIGGETAQNADIRSALDRDTTLIVLLVLAIVTVVLVLLLRSLLAPLYLVATLLLSFLATLGATTFFTVTVLGDDGIGNRVTAYIFVFLVALGVDYNIFIMSRFKQELRTQPPAKAITAALTRTGGVISSAGLILAATFAVLMTQPIRELFQFGFAMACGILLDTFLIRPLLVPAIVRLLGNRALWPARPGTPQTPSTPTSEPPSADAPAARAAETGTSRLLRAFTWIAIIEACTWAGLLAGMYLKYIPETTELGVRIFGTLHGAAFIVYVSLTVLVAIRLKWRLGRTTIFALLAAVPPFMTIAFEIWARRTGRLPQPTADPSPTPAL.

Helical transmembrane passes span 18–38 (AVVVAFWVLIAGLLAGVAPAL), 187–207 (GGDKVLLLATVVLVLIILLAI), 215–235 (LVPLLAVGVAMRVAETLGAIL), 248–268 (ASIMTVLLFGVGTDYALIITA), 302–322 (IVLAMFALLVAVSPALHGFGP), 326–346 (LGVAVMALVAFTFIPALVLLL), 381–401 (VKVASAVIALLVVLSAGLLGY), 539–559 (DTTLIVLLVLAIVTVVLVLLL), 562–582 (LLAPLYLVATLLLSFLATLGA), 600–620 (VTAYIFVFLVALGVDYNIFIM), 643–663 (TGGVISSAGLILAATFAVLMT), and 672–692 (FGFAMACGILLDTFLIRPLLV). Residues 708-729 (RPGTPQTPSTPTSEPPSADAPA) form a disordered region. 3 consecutive transmembrane segments (helical) span residues 744–764 (FTWIAIIEACTWAGLLAGMYL), 778–798 (FGTLHGAAFIVYVSLTVLVAI), and 808–828 (TIFALLAAVPPFMTIAFEIWA).

It belongs to the resistance-nodulation-cell division (RND) (TC 2.A.6) family. MmpL subfamily.

The protein resides in the cell membrane. The sequence is that of Putative membrane protein SCO5905 from Streptomyces coelicolor (strain ATCC BAA-471 / A3(2) / M145).